The primary structure comprises 385 residues: Mannitol-1-phosphate 5-dehydrogenase (385 aa).

Ala-3–Gly-14 contributes to the NAD(+) binding site.

This sequence belongs to the mannitol dehydrogenase family.

The enzyme catalyses D-mannitol 1-phosphate + NAD(+) = beta-D-fructose 6-phosphate + NADH + H(+). This Buchnera aphidicola subsp. Acyrthosiphon pisum (strain 5A) protein is Mannitol-1-phosphate 5-dehydrogenase.